The following is a 146-amino-acid chain: Large ribosomal subunit protein uL15 (146 aa).

The interval 1 to 66 is disordered; the sequence is MKLHELKPAP…LQRRMPKRGF (66 aa). Gly residues-rich tracts occupy residues 21-31 and 42-52; these read QGIGSGMGKTA and SGGGVRPGFEG.

It belongs to the universal ribosomal protein uL15 family. As to quaternary structure, part of the 50S ribosomal subunit.

In terms of biological role, binds to the 23S rRNA. The sequence is that of Large ribosomal subunit protein uL15 from Pelotomaculum thermopropionicum (strain DSM 13744 / JCM 10971 / SI).